The following is a 140-amino-acid chain: Nucleoside diphosphate kinase (140 aa).

ATP is bound by residues K11, F59, R87, T93, R104, and N114. H117 serves as the catalytic Pros-phosphohistidine intermediate.

The protein belongs to the NDK family. Homotetramer. Mg(2+) serves as cofactor.

It is found in the cytoplasm. The catalysed reaction is a 2'-deoxyribonucleoside 5'-diphosphate + ATP = a 2'-deoxyribonucleoside 5'-triphosphate + ADP. The enzyme catalyses a ribonucleoside 5'-diphosphate + ATP = a ribonucleoside 5'-triphosphate + ADP. Major role in the synthesis of nucleoside triphosphates other than ATP. The ATP gamma phosphate is transferred to the NDP beta phosphate via a ping-pong mechanism, using a phosphorylated active-site intermediate. The protein is Nucleoside diphosphate kinase of Maricaulis maris (strain MCS10) (Caulobacter maris).